We begin with the raw amino-acid sequence, 118 residues long: uncharacterized protein (118 aa).

The signal sequence occupies residues 1-27 (MPIKEPDVWALIWSWLQTNLSSSSAQS).

This is an uncharacterized protein from Haemophilus influenzae (strain ATCC 51907 / DSM 11121 / KW20 / Rd).